The primary structure comprises 62 residues: Large ribosomal subunit protein bL28 (62 aa).

Residues 1–22 are disordered; that stretch reads MAKKCAISGKGPMSGNNVSHAK.

This sequence belongs to the bacterial ribosomal protein bL28 family.

The protein is Large ribosomal subunit protein bL28 of Sulfurimonas denitrificans (strain ATCC 33889 / DSM 1251) (Thiomicrospira denitrificans (strain ATCC 33889 / DSM 1251)).